Reading from the N-terminus, the 246-residue chain is 1-(5-phosphoribosyl)-5-[(5-phosphoribosylamino)methylideneamino] imidazole-4-carboxamide isomerase (246 aa).

Asp10 serves as the catalytic Proton acceptor.

The protein belongs to the HisA/HisF family.

The protein localises to the cytoplasm. The catalysed reaction is 1-(5-phospho-beta-D-ribosyl)-5-[(5-phospho-beta-D-ribosylamino)methylideneamino]imidazole-4-carboxamide = 5-[(5-phospho-1-deoxy-D-ribulos-1-ylimino)methylamino]-1-(5-phospho-beta-D-ribosyl)imidazole-4-carboxamide. It participates in amino-acid biosynthesis; L-histidine biosynthesis; L-histidine from 5-phospho-alpha-D-ribose 1-diphosphate: step 4/9. This Corynebacterium efficiens (strain DSM 44549 / YS-314 / AJ 12310 / JCM 11189 / NBRC 100395) protein is 1-(5-phosphoribosyl)-5-[(5-phosphoribosylamino)methylideneamino] imidazole-4-carboxamide isomerase.